An 819-amino-acid chain; its full sequence is Leucine--tRNA ligase (819 aa).

The short motif at 42 to 53 is the 'HIGH' region element; the sequence is PYPSGAKLHIGH. The 'KMSKS' region motif lies at 578–582; that stretch reads RMSKS. An ATP-binding site is contributed by Lys581.

This sequence belongs to the class-I aminoacyl-tRNA synthetase family.

The protein localises to the cytoplasm. The enzyme catalyses tRNA(Leu) + L-leucine + ATP = L-leucyl-tRNA(Leu) + AMP + diphosphate. This is Leucine--tRNA ligase from Caldanaerobacter subterraneus subsp. tengcongensis (strain DSM 15242 / JCM 11007 / NBRC 100824 / MB4) (Thermoanaerobacter tengcongensis).